The sequence spans 448 residues: Antizyme inhibitor 1 (448 aa).

This sequence belongs to the Orn/Lys/Arg decarboxylase class-II family. ODC antizyme inhibitor subfamily. Monomer. Interacts with OAZ1 and OAZ3; this interaction disrupts the interaction between the antizyme and ODC1. Post-translationally, ubiquitinated, leading to its proteasomal degradation; a process that is reduced in presence of antizyme OAZ1. Expressed in various tissues including liver, heart and kidney.

It is found in the nucleus. In terms of biological role, antizyme inhibitor (AZI) protein that positively regulates ornithine decarboxylase (ODC) activity and polyamine uptake. AZI is an enzymatically inactive ODC homolog that counteracts the negative effect of ODC antizymes (AZs) OAZ1, OAZ2 and OAZ3 on ODC activity by competing with ODC for antizyme-binding. Inhibits antizyme-dependent ODC degradation and releases ODC monomers from their inactive complex with antizymes, leading to formation of the catalytically active ODC homodimer and restoring polyamine production. This chain is Antizyme inhibitor 1 (Azin1), found in Rattus norvegicus (Rat).